The following is a 481-amino-acid chain: Argininosuccinate lyase (481 aa).

It belongs to the lyase 1 family. Argininosuccinate lyase subfamily.

The protein localises to the cytoplasm. It carries out the reaction 2-(N(omega)-L-arginino)succinate = fumarate + L-arginine. The protein operates within amino-acid biosynthesis; L-arginine biosynthesis; L-arginine from L-ornithine and carbamoyl phosphate: step 3/3. This Methanococcus maripaludis (strain C5 / ATCC BAA-1333) protein is Argininosuccinate lyase.